A 236-amino-acid chain; its full sequence is Ribosome maturation protein SDO1 homolog (236 aa).

This sequence belongs to the SDO1/SBDS family.

This Pyrococcus abyssi (strain GE5 / Orsay) protein is Ribosome maturation protein SDO1 homolog.